The sequence spans 76 residues: Acyl carrier protein (76 aa).

A Carrier domain is found at 2–76 (KDNFTRLQSI…QDVLNYLERN (75 aa)). The residue at position 37 (serine 37) is an O-(pantetheine 4'-phosphoryl)serine.

Belongs to the acyl carrier protein (ACP) family. In terms of processing, 4'-phosphopantetheine is transferred from CoA to a specific serine of apo-ACP by AcpS. This modification is essential for activity because fatty acids are bound in thioester linkage to the sulfhydryl of the prosthetic group.

The protein resides in the plastid. It localises to the chloroplast. Its pathway is lipid metabolism; fatty acid biosynthesis. In terms of biological role, carrier of the growing fatty acid chain in fatty acid biosynthesis. In Phaeodactylum tricornutum (strain CCAP 1055/1), this protein is Acyl carrier protein.